Consider the following 116-residue polypeptide: Phosphoribosyl-ATP pyrophosphatase (116 aa).

The protein belongs to the PRA-PH family.

The protein localises to the cytoplasm. It catalyses the reaction 1-(5-phospho-beta-D-ribosyl)-ATP + H2O = 1-(5-phospho-beta-D-ribosyl)-5'-AMP + diphosphate + H(+). Its pathway is amino-acid biosynthesis; L-histidine biosynthesis; L-histidine from 5-phospho-alpha-D-ribose 1-diphosphate: step 2/9. The sequence is that of Phosphoribosyl-ATP pyrophosphatase from Nitrobacter winogradskyi (strain ATCC 25391 / DSM 10237 / CIP 104748 / NCIMB 11846 / Nb-255).